The sequence spans 87 residues: Serine rich endogenous peptide 17 (87 aa).

Positions 1 to 28 are cleaved as a signal peptide; sequence MTGKAPFFVILIAALLLLSSFFFGEVKA. A disordered region spans residues 32–87; the sequence is KQPKHRKLGNREGDENRSNEIVVQMKARVKRSKSKRGPQKKEPYKKPPCSPPTHPA. Basic and acidic residues predominate over residues 40-49; that stretch reads GNREGDENRS. The SCOOP motif signature appears at 51–71; it reads EIVVQMKARVKRSKSKRGPQK. Residues 58-69 show a composition bias toward basic residues; the sequence is ARVKRSKSKRGP. The SxS motif essential for MIK2 binding signature appears at 63 to 65; it reads SKS. Over residues 77 to 87 the composition is skewed to pro residues; it reads KPPCSPPTHPA.

Belongs to the serine rich endogenous peptide (SCOOP) phytocytokine family. As to quaternary structure, interacts with MIK2 (via extracellular leucine-rich repeat domain); this interaction triggers the formation of complex between MIK2 and the BAK1/SERK3 and SERK4 coreceptors, and subsequent BAK1 activation by phosphorylation.

It is found in the cell membrane. It localises to the secreted. The protein localises to the extracellular space. The protein resides in the apoplast. Its function is as follows. Brassicaceae-specific phytocytokine (plant endogenous peptide released into the apoplast) perceived by MIK2 in a BAK1/SERK3 and SERK4 coreceptors-dependent manner, that modulates various physiological and antimicrobial processes including growth prevention and reactive oxygen species (ROS) response regulation. The protein is Serine rich endogenous peptide 17 of Arabidopsis thaliana (Mouse-ear cress).